Reading from the N-terminus, the 132-residue chain is Small ribosomal subunit protein uS8 (132 aa).

The protein belongs to the universal ribosomal protein uS8 family. Part of the 30S ribosomal subunit. Contacts proteins S5 and S12.

Its function is as follows. One of the primary rRNA binding proteins, it binds directly to 16S rRNA central domain where it helps coordinate assembly of the platform of the 30S subunit. The polypeptide is Small ribosomal subunit protein uS8 (Anoxybacillus flavithermus (strain DSM 21510 / WK1)).